Reading from the N-terminus, the 237-residue chain is tRNA1(Val) (adenine(37)-N6)-methyltransferase (237 aa).

Belongs to the methyltransferase superfamily. tRNA (adenine-N(6)-)-methyltransferase family.

It localises to the cytoplasm. It catalyses the reaction adenosine(37) in tRNA1(Val) + S-adenosyl-L-methionine = N(6)-methyladenosine(37) in tRNA1(Val) + S-adenosyl-L-homocysteine + H(+). Specifically methylates the adenine in position 37 of tRNA(1)(Val) (anticodon cmo5UAC). The polypeptide is tRNA1(Val) (adenine(37)-N6)-methyltransferase (Parabacteroides distasonis (strain ATCC 8503 / DSM 20701 / CIP 104284 / JCM 5825 / NCTC 11152)).